The primary structure comprises 146 residues: MNIIAQLEAEQCAKIEAKRQLPKFQAGDTVRVMVRVTEGTRTRVQAYEGVCIARSGGGLNETFTVRKISYGEGVERVFPVYSPLIEGVELVRRGKVRRAKLYYLRGLRGKAARIAEKRVYRKKDEKVAERVQATAVTVDVAEQAAE.

Belongs to the bacterial ribosomal protein bL19 family.

This protein is located at the 30S-50S ribosomal subunit interface and may play a role in the structure and function of the aminoacyl-tRNA binding site. The sequence is that of Large ribosomal subunit protein bL19 from Bartonella quintana (strain Toulouse) (Rochalimaea quintana).